A 440-amino-acid chain; its full sequence is Xaa-Pro dipeptidase (440 aa).

Mn(2+) is bound by residues Asp244, Asp255, His335, Glu380, and Glu419.

It belongs to the peptidase M24B family. Bacterial-type prolidase subfamily. It depends on Mn(2+) as a cofactor.

The catalysed reaction is Xaa-L-Pro dipeptide + H2O = an L-alpha-amino acid + L-proline. Its function is as follows. Splits dipeptides with a prolyl residue in the C-terminal position. This chain is Xaa-Pro dipeptidase, found in Shewanella pealeana (strain ATCC 700345 / ANG-SQ1).